The sequence spans 673 residues: DNA ligase (673 aa).

Residues 35 to 39 (DADYD), 84 to 85 (SL), and glutamate 115 each bind NAD(+). Lysine 117 (N6-AMP-lysine intermediate) is an active-site residue. The NAD(+) site is built by arginine 138, glutamate 180, lysine 296, and lysine 320. 4 residues coordinate Zn(2+): cysteine 415, cysteine 418, cysteine 433, and cysteine 438. Residues 595 to 673 (ERGTALAGQT…EDALKKLLGK (79 aa)) enclose the BRCT domain.

Belongs to the NAD-dependent DNA ligase family. LigA subfamily. It depends on Mg(2+) as a cofactor. The cofactor is Mn(2+).

It catalyses the reaction NAD(+) + (deoxyribonucleotide)n-3'-hydroxyl + 5'-phospho-(deoxyribonucleotide)m = (deoxyribonucleotide)n+m + AMP + beta-nicotinamide D-nucleotide.. In terms of biological role, DNA ligase that catalyzes the formation of phosphodiester linkages between 5'-phosphoryl and 3'-hydroxyl groups in double-stranded DNA using NAD as a coenzyme and as the energy source for the reaction. It is essential for DNA replication and repair of damaged DNA. The sequence is that of DNA ligase from Koribacter versatilis (strain Ellin345).